We begin with the raw amino-acid sequence, 91 residues long: HssA/B-like protein 52 (91 aa).

Disordered regions lie at residues 1–20 (MTLF…SKSS) and 72–91 (GGCG…CCGI).

This sequence belongs to the hssA/B family.

The polypeptide is HssA/B-like protein 52 (hssl52) (Dictyostelium discoideum (Social amoeba)).